The chain runs to 239 residues: Probable transcriptional regulatory protein Veis_4238 (239 aa).

Positions Met-1 to Gly-22 are disordered.

Belongs to the TACO1 family.

Its subcellular location is the cytoplasm. The polypeptide is Probable transcriptional regulatory protein Veis_4238 (Verminephrobacter eiseniae (strain EF01-2)).